Reading from the N-terminus, the 923-residue chain is Neuropilin-1 (923 aa).

Positions 1-21 (MERGLPLLCAVLALVLAPAGA) are cleaved as a signal peptide. The Extracellular segment spans residues 22–856 (FRNDKCGDTI…PGNVLKTLDP (835 aa)). 3 disulfides stabilise this stretch: cysteine 27-cysteine 54, cysteine 82-cysteine 104, and cysteine 147-cysteine 173. 2 CUB domains span residues 27–141 (CGDT…YEIF) and 147–265 (CSQN…YSVL). Asparagine 150 carries N-linked (GlcNAc...) asparagine glycosylation. 3 residues coordinate Ca(2+): glutamate 195, aspartate 209, and aspartate 250. An intrachain disulfide couples cysteine 206 to cysteine 228. Residues asparagine 261, asparagine 300, and asparagine 522 are each glycosylated (N-linked (GlcNAc...) asparagine). 2 disulfides stabilise this stretch: cysteine 275-cysteine 424 and cysteine 431-cysteine 583. F5/8 type C domains are found at residues 275 to 424 (CMEA…VYGC) and 431 to 583 (CSGM…LLGC). A glycan (O-linked (Xyl...) (chondroitin sulfate) serine; alternate) is linked at serine 612. A glycan (O-linked (Xyl...) (heparan sulfate) serine; alternate) is linked at serine 612. The 167-residue stretch at 645–811 (TYGFNCEFGW…NHISQEDCAK (167 aa)) folds into the MAM domain. A disordered region spans residues 820-845 (PEIKIDETGSTPGYEGEGEGDKNISR). Serine 829 is a glycosylation site (O-linked (Xyl...) (chondroitin sulfate) serine). Asparagine 842 is a glycosylation site (N-linked (GlcNAc...) asparagine). A helical membrane pass occupies residues 857–879 (ILITIIAMSALGVLLGAVCGVVL). Topologically, residues 880–923 (YCACWHNGMSERNLSALENYNFELVDGVKLKKDKLNTQSTYSEA) are cytoplasmic. Serine 894 carries the post-translational modification Phosphoserine.

Belongs to the neuropilin family. As to quaternary structure, homodimer, and heterodimer with NRP2. Interacts with FER. Interacts with PLXNB1. Interacts with VEGFA. Interacts with ABCB8/MITOSUR in mitochondria. (Microbial infection) Interacts with SARS coronavirus-2/SARS-CoV-2 spike protein S1 (via the CendR motif RRAR). As to expression, the expression of isoforms 1 and 2 does not seem to overlap. Expressed in olfactory epithelium (at protein level). Expressed in fibroblasts (at protein level). Expressed by the blood vessels of different tissues. In the developing embryo it is found predominantly in the nervous system. In adult tissues, it is highly expressed in heart and placenta; moderately in lung, liver, skeletal muscle, kidney and pancreas; and low in adult brain. Expressed in the central nervous system, including olfactory related regions such as the olfactory tubercles and paraolfactory gyri. In terms of tissue distribution, the expression of isoforms 1 and 2 does not seem to overlap. Found in liver hepatocytes, kidney distal and proximal tubules.

The protein localises to the secreted. It is found in the mitochondrion membrane. The protein resides in the cell membrane. Its subcellular location is the cytoplasm. Its function is as follows. Cell-surface receptor involved in the development of the cardiovascular system, in angiogenesis, in the formation of certain neuronal circuits and in organogenesis outside the nervous system. Mediates the chemorepulsant activity of semaphorins. Recognizes a C-end rule (CendR) motif R/KXXR/K on its ligands which causes cellular internalization and vascular leakage. It binds to semaphorin 3A, the PLGF-2 isoform of PGF, the VEGF165 isoform of VEGFA and VEGFB. Coexpression with KDR results in increased VEGF165 binding to KDR as well as increased chemotaxis. Regulates VEGF-induced angiogenesis. Binding to VEGFA initiates a signaling pathway needed for motor neuron axon guidance and cell body migration, including for the caudal migration of facial motor neurons from rhombomere 4 to rhombomere 6 during embryonic development. Regulates mitochondrial iron transport via interaction with ABCB8/MITOSUR. (Microbial infection) Acts as a host factor for human coronavirus SARS-CoV-2 infection. Recognizes and binds to CendR motif RRAR on SARS-CoV-2 spike protein S1 which enhances SARS-CoV-2 infection. In terms of biological role, binds VEGF-165 and may inhibit its binding to cells. May induce apoptosis by sequestering VEGF-165. May bind as well various members of the semaphorin family. Its expression has an averse effect on blood vessel number and integrity. This is Neuropilin-1 from Homo sapiens (Human).